The following is a 517-amino-acid chain: T-complex protein 11-like protein 2 (517 aa).

The disordered stretch occupies residues methionine 1–glycine 59. Serine 16 is modified (phosphoserine). A compositionally biased stretch (low complexity) spans serine 36–serine 55.

The protein belongs to the TCP11 family. Interacts with FMNL2; this interaction promotes muscle-derived satellite cell (MDSC) migration and differentiation.

It localises to the cytoplasm. Its subcellular location is the cytoskeleton. In terms of biological role, promotes the migration of muscle-derived satellite cells (MDSCs) during differentiation throught interaction with FMNL2 and therefore may participate in microfilament assembly. In Mus musculus (Mouse), this protein is T-complex protein 11-like protein 2.